Consider the following 507-residue polypeptide: ATP synthase subunit alpha (507 aa).

The interval 118–141 (VDGLGPIETTETRPIESPAPGVMD) is disordered. Residue 172-179 (GDRQTGKT) coordinates ATP.

Belongs to the ATPase alpha/beta chains family. In terms of assembly, F-type ATPases have 2 components, CF(1) - the catalytic core - and CF(0) - the membrane proton channel. CF(1) has five subunits: alpha(3), beta(3), gamma(1), delta(1), epsilon(1). CF(0) has three main subunits: a(1), b(2) and c(9-12). The alpha and beta chains form an alternating ring which encloses part of the gamma chain. CF(1) is attached to CF(0) by a central stalk formed by the gamma and epsilon chains, while a peripheral stalk is formed by the delta and b chains.

The protein localises to the cell membrane. The enzyme catalyses ATP + H2O + 4 H(+)(in) = ADP + phosphate + 5 H(+)(out). Its function is as follows. Produces ATP from ADP in the presence of a proton gradient across the membrane. The alpha chain is a regulatory subunit. This chain is ATP synthase subunit alpha, found in Anoxybacillus flavithermus (strain DSM 21510 / WK1).